Reading from the N-terminus, the 556-residue chain is M-phase inducer phosphatase (556 aa).

2 disordered regions span residues 165 to 186 and 257 to 297; these read STDG…QERR and TSGL…RPRK. The span at 287–297 shows a compositional bias: basic residues; the sequence is KSAHPNMRPRK. Residues 371–474 form the Rhodanese domain; that stretch reads MFDNIMIIDC…FFAEHRSLCY (104 aa). Residue C421 is part of the active site. Residues 505-516 show a composition bias toward polar residues; the sequence is RAQTFAFGQQSP. A disordered region spans residues 505–556; that stretch reads RAQTFAFGQQSPEMEDSPTGRCRNNPGDRKLLASPFNDSPGSRFPGRRMLSY.

The protein belongs to the MPI phosphatase family.

The catalysed reaction is O-phospho-L-tyrosyl-[protein] + H2O = L-tyrosyl-[protein] + phosphate. This protein functions as a dosage-dependent inducer in mitotic control. It is a tyrosine protein phosphatase required for progression of the cell cycle. It may directly dephosphorylate p34(cdc2) and activate the p34(cdc2) kinase activity. The chain is M-phase inducer phosphatase (nimT) from Emericella nidulans (strain FGSC A4 / ATCC 38163 / CBS 112.46 / NRRL 194 / M139) (Aspergillus nidulans).